The primary structure comprises 91 residues: Non-specific lipid-transfer protein 1 (91 aa).

4 disulfide bridges follow: Cys4/Cys51, Cys14/Cys28, Cys29/Cys74, and Cys49/Cys88.

As to expression, detected in seeds (at protein level).

Its function is as follows. Plant non-specific lipid-transfer proteins transfer phospholipids as well as galactolipids across membranes. May play a role in wax or cutin deposition in the cell walls of expanding epidermal cells and certain secretory tissues. In Trachyspermum ammi (Ajowan caraway), this protein is Non-specific lipid-transfer protein 1.